The chain runs to 83 residues: Homeobox protein DLX-2 (83 aa).

Residues 1–14 (STATDSSYYTNQQH) are compositionally biased toward polar residues. Disordered regions lie at residues 1–27 (STAT…SPYA) and 63–83 (PYGT…LEPE).

The protein belongs to the distal-less homeobox family. Interacts (via homeobox DNA-binding domain) with POU4F2; this interaction enhances retinal ganglion cell (RGC) differentiation.

It localises to the nucleus. Its function is as follows. Acts as a transcriptional activator. Activates transcription of CGA/alpha-GSU, via binding to the downstream activin regulatory element (DARE) in the gene promoter. Plays a role in terminal differentiation of interneurons, such as amacrine and bipolar cells in the developing retina. Likely to play a regulatory role in the development of the ventral forebrain. May play a role in craniofacial patterning and morphogenesis. This chain is Homeobox protein DLX-2 (Dlx2), found in Rattus norvegicus (Rat).